A 278-amino-acid polypeptide reads, in one-letter code: Formamidopyrimidine-DNA glycosylase (278 aa).

The active-site Schiff-base intermediate with DNA is Pro-2. Catalysis depends on Glu-3, which acts as the Proton donor. Lys-58 serves as the catalytic Proton donor; for beta-elimination activity. 3 residues coordinate DNA: His-91, Arg-109, and Arg-158. An FPG-type zinc finger spans residues 243-277; the sequence is KVYDRKGLPCKVCKTPISQMVQGQRTTYFCSQCQK. Arg-267 acts as the Proton donor; for delta-elimination activity in catalysis.

The protein belongs to the FPG family. In terms of assembly, monomer. Zn(2+) serves as cofactor.

The enzyme catalyses Hydrolysis of DNA containing ring-opened 7-methylguanine residues, releasing 2,6-diamino-4-hydroxy-5-(N-methyl)formamidopyrimidine.. It carries out the reaction 2'-deoxyribonucleotide-(2'-deoxyribose 5'-phosphate)-2'-deoxyribonucleotide-DNA = a 3'-end 2'-deoxyribonucleotide-(2,3-dehydro-2,3-deoxyribose 5'-phosphate)-DNA + a 5'-end 5'-phospho-2'-deoxyribonucleoside-DNA + H(+). In terms of biological role, involved in base excision repair of DNA damaged by oxidation or by mutagenic agents. Acts as a DNA glycosylase that recognizes and removes damaged bases. Has a preference for oxidized purines, such as 7,8-dihydro-8-oxoguanine (8-oxoG). Has AP (apurinic/apyrimidinic) lyase activity and introduces nicks in the DNA strand. Cleaves the DNA backbone by beta-delta elimination to generate a single-strand break at the site of the removed base with both 3'- and 5'-phosphates. The protein is Formamidopyrimidine-DNA glycosylase of Polynucleobacter necessarius subsp. necessarius (strain STIR1).